The primary structure comprises 1228 residues: MKGARLFVLLSSLWSGGIGLNNSKHSWTIPEDGNSQKTMPSASVPPNKIQSLQILPTTRVMSAEIATTPEARTSEDSLLKSTLPPSETSAPAEGVRNQTLTSTEKAEGVVKLQNLTLPTNASIKFNPGAESVVLSNSTLKFLQSFARKSNEQATSLNTVGGTGGIGGVGGTGGVGNRAPRETYLSRGDSSSSQRTDYQKSNFETTRGKNWCAYVHTRLSPTVILDNQVTYVPGGKGPCGWTGGSCPQRSQKISNPVYRMQHKIVTSLDWRCCPGYSGPKCQLRAQEQQSLIHTNQAESHTAVGRGVAEQQQQQGCGDPEVMQKMTDQVNYQAMKLTLLQKKIDNISLTVNDVRNTYSSLEGKVSEDKSREFQSLLKGLKSKSINVLIRDIVREQFKIFQNDMQETVAQLFKTVSSLSEDLESTRQIIQKVNESVVSIAAQQKFVLVQENRPTLTDIVELRNHIVNVRQEMTLTCEKPIKELEVKQTHLEGALEQEHSRSILYYESLNKTLSKLKEVHEQLLSTEQVSDQKNAPAAESVSNNVTEYMSTLHENIKKQSLMMLQMFEDLHIQESKINNLTVSLEMEKESLRGECEDMLSKCRNDFKFQLKDTEENLHVLNQTLAEVLFPMDNKMDKMSEQLNDLTYDMEILQPLLEQGASLRQTMTYEQPKEAIVIRKKIENLTSAVNSLNFIIKELTKRHNLLRNEVQGRDDALERRINEYALEMEDGLNKTMTIINNAIDFIQDNYALKETLSTIKDNSEIHHKCTSDMETILTFIPQFHRLNDSIQTLVNDNQRYNFVLQVAKTLAGIPRDEKLNQSNFQKMYQMFNETTSQVRKYQQNMSHLEEKLLLTTKISKNFETRLQDIESKVTQTLIPYYISVKKGSVVTNERDQALQLQVLNSRFKALEAKSIHLSINFFSLNKTLHEVLTMCHNASTSVSELNATIPKWIKHSLPDIQLLQKGLTEFVEPIIQIKTQAALSNLTCCIDRSLPGSLANVVKSQKQVKSLPKKINALKKPTVNLTTVLIGRTQRNTDNIIYPEEYSSCSRHPCQNGGTCINGRTSFTCACRHPFTGDNCTIKLVEENALAPDFSKGSYRYAPMVAFFASHTYGMTIPGPILFNNLDVNYGASYTPRTGKFRIPYLGVYVFKYTIESFSAHISGFLVVDGIDKLAFESENINSEIHCDRVLTGDALLELNYGQEVWLRLAKGTIPAKFPPVTTFSGYLLYRT.

Positions 1–19 are cleaved as a signal peptide; that stretch reads MKGARLFVLLSSLWSGGIG. N21 carries N-linked (GlcNAc...) asparagine glycosylation. Residues 68 to 98 are disordered; it reads TPEARTSEDSLLKSTLPPSETSAPAEGVRNQ. The span at 79–89 shows a compositional bias: polar residues; it reads LKSTLPPSETS. N-linked (GlcNAc...) asparagine glycosylation is found at N97, N114, and N120. An N-linked (GlcNAc...) (complex) asparagine glycan is attached at N136. Residues 157–200 form a disordered region; that stretch reads NTVGGTGGIGGVGGTGGVGNRAPRETYLSRGDSSSSQRTDYQKS. Residues 160–175 show a composition bias toward gly residues; the sequence is GGTGGIGGVGGTGGVG. Residues 186–188 carry the Cell attachment site motif; the sequence is RGD. Residues 187–200 are compositionally biased toward polar residues; that stretch reads GDSSSSQRTDYQKS. Residues 207–282 form the EMI domain; sequence GKNWCAYVHT…PGYSGPKCQL (76 aa). Cystine bridges form between C211–C272, C238–C245, and C271–C280. A glycan (O-linked (Fuc) threonine) is linked at T216. O-linked (Fuc) threonine glycosylation occurs at T265. Coiled coils occupy residues 333 to 365 and 400 to 430; these read MKLTLLQKKIDNISLTVNDVRNTYSSLEGKVSE and NDMQETVAQLFKTVSSLSEDLESTRQIIQKV. N-linked (GlcNAc...) asparagine glycosylation occurs at N344. N431, N507, N541, N576, N618, N680, N729, N783, N816, N828, N840, N921, N933, N942, N981, and N1020 each carry an N-linked (GlcNAc...) asparagine glycan. Residues 503 to 523 adopt a coiled-coil conformation; sequence YESLNKTLSKLKEVHEQLLST. Coiled-coil stretches lie at residues 580 to 650 and 675 to 726; these read SLEM…EILQ and RKKI…EMED. A coiled-coil region spans residues 819 to 869; sequence NFQKMYQMFNETTSQVRKYQQNMSHLEEKLLLTTKISKNFETRLQDIESKV. The 37-residue stretch at 1041 to 1077 folds into the EGF-like domain; sequence EYSSCSRHPCQNGGTCINGRTSFTCACRHPFTGDNCT. 3 disulfide bridges follow: C1045/C1056, C1050/C1065, and C1067/C1076. T1055 is a glycosylation site (O-linked (Fuc) threonine). N1075 carries an N-linked (GlcNAc...) asparagine glycan. The C1q domain maps to 1096–1228; it reads RYAPMVAFFA…TFSGYLLYRT (133 aa).

In terms of assembly, multimeric. Composed of varying sized, disulfide-linked multimers, the smallest of which is a homotrimer. Proteolysis of the promultimerin in the N-terminal region, leads to the mature p155 form that is stored in platelets. Interacts with factor V/Va. In terms of processing, the N-terminus is blocked. Post-translationally, extensively N-glycosylated. O-fucosylated within the EMI domain (at Thr-216 and Thr-265) by FUT10/POFUT3 and FUT11/POFUT4. O-fucosylation at Thr-216 and Thr-1055 are required for facilitating protein folding and secretion. Synthesized by endothelial cells and megakaryocytes. Stored in platelet alpha granules and endothelial cell Weibel-Palade bodies, following activation of these cells, it is released and attached to megakaryocytes, platelets, endothelium and subendothelium of blood vessels. Not found in plasma. Found in vascular tissues such as placenta, lung, and liver.

The protein localises to the secreted. Carrier protein for platelet (but not plasma) factor V/Va. Plays a role in the storage and stabilization of factor V in platelets. Upon release following platelet activation, may limit platelet and plasma factor Va-dependent thrombin generation. Ligand for integrin alpha-IIb/beta-3 and integrin alpha-V/beta-3 on activated platelets, and may function as an extracellular matrix or adhesive protein. The chain is Multimerin-1 (MMRN1) from Homo sapiens (Human).